The sequence spans 497 residues: Casein kinase I isoform delta (497 aa).

Disordered stretches follow at residues 1–58 and 86–109; these read MATM…EEMN and PIQQ…HPTQ. Over residues 14–34 the composition is skewed to polar residues; it reads WHNNTSTPMDTTEPATNSHNP. The segment covering 88-105 has biased composition (low complexity); sequence QQHQQPPLLQQAQPSQIP. One can recognise a Protein kinase domain in the interval 191 to 458; that stretch reads FRLGRKIGSG…YLRNLFRTLF (268 aa). Residues 197–205 and Lys220 each bind ATP; that span reads IGSGSFGDI. The Proton acceptor role is filled by Asp310.

This sequence belongs to the protein kinase superfamily. CK1 Ser/Thr protein kinase family. Casein kinase I subfamily. As to quaternary structure, monomer. Expressed throughout larval development and into the adult stage in both hypodermal seam cells and the hermaphrodite specific neuron.

It is found in the cytoplasm. The protein resides in the nucleus. It localises to the chromosome. Its subcellular location is the centromere. The protein localises to the cell junction. It is found in the adherens junction. It catalyses the reaction L-seryl-[protein] + ATP = O-phospho-L-seryl-[protein] + ADP + H(+). The catalysed reaction is L-threonyl-[protein] + ATP = O-phospho-L-threonyl-[protein] + ADP + H(+). With respect to regulation, exhibits substrate-dependent heparin activation. Its function is as follows. Essential serine/threonine-protein kinase that regulates diverse cellular growth and survival processes including Wnt signaling, DNA repair and circadian rhythms. Casein kinases are operationally defined by their preferential utilization of acidic proteins. Positively regulates the expression of components of the heterochronic pathway, which regulate developmental timing, such as the transcriptional repressor lin-42 and microRNAs such as let-7. Negatively regulates cell cycle exit and cell fusion to prevent the premature differentiation of hypodermal seam cells into adult cells. Plays a role in regulating axon branching and subsequently, the maturation of the nervous system, most likely by preventing the premature termination of transcripts for proteins such as Ankyrin/unc-44, which are required for maintaining the nervous system. May phosphorylate ssup-72 to promote nervous system maturation. The protein is Casein kinase I isoform delta of Caenorhabditis elegans.